A 292-amino-acid chain; its full sequence is HTH-type transcriptional regulator BlaA (292 aa).

An HTH lysR-type domain is found at 5 to 62; sequence LPLNALRAFEASARHLNFTKAALELYVTQGAVSQQVRMLEERLGVILFKRLPRGLEMT. Positions 22–41 form a DNA-binding region, H-T-H motif; that stretch reads FTKAALELYVTQGAVSQQVR.

This sequence belongs to the LysR transcriptional regulatory family.

Its function is as follows. Positive regulator of the expression of the gene (blaB) for beta-lactamase. This is HTH-type transcriptional regulator BlaA (blaA) from Proteus vulgaris.